A 443-amino-acid chain; its full sequence is UDP-N-acetylmuramate--L-alanine ligase (443 aa).

110 to 116 lines the ATP pocket; sequence GAHGKTS.

Belongs to the MurCDEF family.

The protein resides in the cytoplasm. It carries out the reaction UDP-N-acetyl-alpha-D-muramate + L-alanine + ATP = UDP-N-acetyl-alpha-D-muramoyl-L-alanine + ADP + phosphate + H(+). It participates in cell wall biogenesis; peptidoglycan biosynthesis. In terms of biological role, cell wall formation. The chain is UDP-N-acetylmuramate--L-alanine ligase from Streptococcus equi subsp. equi (strain 4047).